The chain runs to 266 residues: MEYLRFILYGLIQGLTEFLPISSTAHLKIISIFLGIDDPGSSLSATIQLGSVLAIVWYFRNDIFNFRGQSSKNILYYFLHERLLRSIFIGTIPIVLLGGSVKLFVPNFIDNVLRSNLSIALVSIVMAFFMYLADSSKRGSIDIKNHNYSDSFLIGFFQALAIFPGVSRSGITISSALISGWERRDAAKFSFLLGMPAISLAAIVEFIFSFNEFFSIGFLPLLVGLMTTFLSSLLAIDFLLRYFSSNGLKIFIIYRVIFGVVILLNL.

The next 7 membrane-spanning stretches (helical) occupy residues 39–59 (PGSSLSATIQLGSVLAIVWYF), 86–106 (SIFIGTIPIVLLGGSVKLFVP), 112–132 (VLRSNLSIALVSIVMAFFMYL), 153–173 (LIGFFQALAIFPGVSRSGITI), 189–209 (FSFLLGMPAISLAAIVEFIFS), 216–236 (IGFLPLLVGLMTTFLSSLLAI), and 246–266 (NGLKIFIIYRVIFGVVILLNL).

It belongs to the UppP family.

It localises to the cell inner membrane. It catalyses the reaction di-trans,octa-cis-undecaprenyl diphosphate + H2O = di-trans,octa-cis-undecaprenyl phosphate + phosphate + H(+). Its function is as follows. Catalyzes the dephosphorylation of undecaprenyl diphosphate (UPP). Confers resistance to bacitracin. The protein is Undecaprenyl-diphosphatase of Prochlorococcus marinus (strain MIT 9215).